A 289-amino-acid polypeptide reads, in one-letter code: LBH domain-containing protein 1 (289 aa).

2 disordered regions span residues 1 to 36 (MALV…PLWD) and 205 to 289 (EGAE…ASQD). Residues 1–128 (MALVPGRSKE…AEAFFQDQSE (128 aa)) form the LBH domain. Polar residues predominate over residues 15-25 (TRNSPGSSQHP).

As to expression, expressed in bladder cancer tissues (at protein level).

The protein is LBH domain-containing protein 1 of Homo sapiens (Human).